Consider the following 322-residue polypeptide: Transcriptional activator protein Pur-alpha (322 aa).

The interval 1–55 (MADRDSGSEQGGAALGSGGSLGHPGSGSGSGGGGGGGGGGGGSGGGGGGAPGGLQ) is disordered. Position 2 is an N-acetylalanine (A2). Over residues 9-52 (EQGGAALGSGGSLGHPGSGSGSGGGGGGGGGGGGSGGGGGGAPG) the composition is skewed to gly residues. The stretch at 60–125 (ELASKRVDIQ…DFIEHYAQLG (66 aa)) is one PUR repeat I repeat. One copy of the PUR repeat II repeat lies at 142 to 213 (ALKSEFLVRE…KLIDDYGVEE (72 aa)). S182 is modified (phosphoserine). A PUR repeat III repeat occupies 215-281 (PAELPEGTSL…CKYSEEMKKI (67 aa)). Low complexity predominate over residues 295–314 (LHQQQQQQQEETAAATLLLQ). The disordered stretch occupies residues 295-322 (LHQQQQQQQEETAAATLLLQGEEEGEED).

This sequence belongs to the PUR DNA-binding protein family. As to quaternary structure, homodimer, heterodimer with PURB and heterotrimer with PURB and YBX1/Y-box protein 1. Interacts with FMR1; this interaction occurs in association with polyribosome.

The protein localises to the nucleus. This is a probable transcription activator that specifically binds the purine-rich single strand of the PUR element located upstream of the MYC gene. May play a role in the initiation of DNA replication and in recombination. The chain is Transcriptional activator protein Pur-alpha (PURA) from Homo sapiens (Human).